We begin with the raw amino-acid sequence, 204 residues long: CASP-like protein 4B4 (204 aa).

Residues 1–60 (MSAAVAASSGAPAADVEKGAAAADANVDGGGAPAAAAASGEGVVSAVVRRWRRQDLLEKS) are Cytoplasmic-facing. The helical transmembrane segment at 61 to 81 (GSALRVAAWAFSLLAFVVMGA) threads the bilayer. The Extracellular portion of the chain corresponds to 82–98 (NDHGDWRQFEHYEEYRY). The helical transmembrane segment at 99–119 (VVAIGVLAFIYTTLQLVRHGV) threads the bilayer. Residues 120 to 130 (RLTGGQDLQGK) lie on the Cytoplasmic side of the membrane. Residues 131–151 (VAVLVDFAGDQVTAYLLMSAV) form a helical membrane-spanning segment. At 152–175 (SAAIPITNRMREGADNVFTDSSAA) the chain is on the extracellular side. A helical transmembrane segment spans residues 176-196 (SISMAFFAFLCLALSALVSGF). Topologically, residues 197–204 (KLAKQTYI) are cytoplasmic.

The protein belongs to the Casparian strip membrane proteins (CASP) family. In terms of assembly, homodimer and heterodimers.

It localises to the cell membrane. This Oryza sativa subsp. japonica (Rice) protein is CASP-like protein 4B4.